The sequence spans 409 residues: Peptidase T (409 aa).

His78 contacts Zn(2+). Residue Asp80 is part of the active site. Asp140 contacts Zn(2+). Residue Glu174 is the Proton acceptor of the active site. Residues Glu175, Asp197, and His379 each contribute to the Zn(2+) site.

Belongs to the peptidase M20B family. The cofactor is Zn(2+).

Its subcellular location is the cytoplasm. It carries out the reaction Release of the N-terminal residue from a tripeptide.. In terms of biological role, cleaves the N-terminal amino acid of tripeptides. This chain is Peptidase T, found in Vibrio parahaemolyticus serotype O3:K6 (strain RIMD 2210633).